The chain runs to 270 residues: Tryptophan synthase alpha chain (270 aa).

Residues E49 and D60 each act as proton acceptor in the active site.

Belongs to the TrpA family. Tetramer of two alpha and two beta chains.

The enzyme catalyses (1S,2R)-1-C-(indol-3-yl)glycerol 3-phosphate + L-serine = D-glyceraldehyde 3-phosphate + L-tryptophan + H2O. The protein operates within amino-acid biosynthesis; L-tryptophan biosynthesis; L-tryptophan from chorismate: step 5/5. The alpha subunit is responsible for the aldol cleavage of indoleglycerol phosphate to indole and glyceraldehyde 3-phosphate. This Buchnera aphidicola subsp. Diuraphis noxia protein is Tryptophan synthase alpha chain.